We begin with the raw amino-acid sequence, 351 residues long: uncharacterized protein (351 aa).

The Mn(2+) site is built by Asp215, Asp226, His290, Glu319, and Glu333.

Belongs to the peptidase M24B family. Mn(2+) is required as a cofactor.

This is an uncharacterized protein from Staphylococcus aureus (strain MW2).